Consider the following 90-residue polypeptide: Small ribosomal subunit protein bS20 (90 aa).

It belongs to the bacterial ribosomal protein bS20 family.

Binds directly to 16S ribosomal RNA. The polypeptide is Small ribosomal subunit protein bS20 (Francisella tularensis subsp. holarctica (strain FTNF002-00 / FTA)).